Reading from the N-terminus, the 364-residue chain is UDP-N-acetylglucosamine--N-acetylmuramyl-(pentapeptide) pyrophosphoryl-undecaprenol N-acetylglucosamine transferase 1 (364 aa).

UDP-N-acetyl-alpha-D-glucosamine is bound by residues 10-12 (TGG), Asn124, Ser195, Ile250, and Gln295.

This sequence belongs to the glycosyltransferase 28 family. MurG subfamily.

The protein localises to the cell membrane. The catalysed reaction is di-trans,octa-cis-undecaprenyl diphospho-N-acetyl-alpha-D-muramoyl-L-alanyl-D-glutamyl-meso-2,6-diaminopimeloyl-D-alanyl-D-alanine + UDP-N-acetyl-alpha-D-glucosamine = di-trans,octa-cis-undecaprenyl diphospho-[N-acetyl-alpha-D-glucosaminyl-(1-&gt;4)]-N-acetyl-alpha-D-muramoyl-L-alanyl-D-glutamyl-meso-2,6-diaminopimeloyl-D-alanyl-D-alanine + UDP + H(+). The protein operates within cell wall biogenesis; peptidoglycan biosynthesis. Functionally, cell wall formation. Catalyzes the transfer of a GlcNAc subunit on undecaprenyl-pyrophosphoryl-MurNAc-pentapeptide (lipid intermediate I) to form undecaprenyl-pyrophosphoryl-MurNAc-(pentapeptide)GlcNAc (lipid intermediate II). The chain is UDP-N-acetylglucosamine--N-acetylmuramyl-(pentapeptide) pyrophosphoryl-undecaprenol N-acetylglucosamine transferase 1 from Bacillus cereus (strain ATCC 14579 / DSM 31 / CCUG 7414 / JCM 2152 / NBRC 15305 / NCIMB 9373 / NCTC 2599 / NRRL B-3711).